A 418-amino-acid polypeptide reads, in one-letter code: Inner capsid protein sigma-2 (418 aa).

Belongs to the orthoreovirus sigma-1 protein family. In terms of assembly, interacts with protein mu-NS; in viral inclusions.

The protein resides in the virion. Inner capsid (core) component. The chain is Inner capsid protein sigma-2 (S2) from Mammalia (T2J).